The chain runs to 77 residues: U8-lycotoxin-Ls1m (77 aa).

The signal sequence occupies residues 1–20 (MKLMIFTGLFLFAIVSLIEA). The propeptide occupies 21 to 26 (QAENEK).

The protein belongs to the neurotoxin 19 (CSTX) family. 08 (U8-Lctx) subfamily. Contains 4 disulfide bonds. In terms of tissue distribution, expressed by the venom gland.

It is found in the secreted. The protein is U8-lycotoxin-Ls1m of Lycosa singoriensis (Wolf spider).